The primary structure comprises 328 residues: Malate dehydrogenase (328 aa).

13–19 (GGKGQIA) lines the NAD(+) pocket. Substrate is bound by residues Arg94 and Arg100. NAD(+) contacts are provided by residues Asn107, Gln114, and 131-133 (VGN). Positions 133 and 164 each coordinate substrate. Residue His189 is the Proton acceptor of the active site.

The protein belongs to the LDH/MDH superfamily. MDH type 2 family.

The catalysed reaction is (S)-malate + NAD(+) = oxaloacetate + NADH + H(+). In terms of biological role, catalyzes the reversible oxidation of malate to oxaloacetate. This is Malate dehydrogenase from Chlamydia pneumoniae (Chlamydophila pneumoniae).